The sequence spans 610 residues: Pyruvate decarboxylase 1 (610 aa).

Residues aspartate 72 and histidine 159 each coordinate substrate. The thiamine pyrophosphate binding stretch occupies residues 437–519; that stretch reads DSWFNCQKLR…FLINNGGYTI (83 aa). Mg(2+)-binding residues include aspartate 487, asparagine 514, and glycine 516. Glutamate 520 lines the substrate pocket.

It belongs to the TPP enzyme family. As to quaternary structure, homotetramer. A metal cation serves as cofactor. The cofactor is thiamine diphosphate.

The enzyme catalyses a 2-oxocarboxylate + H(+) = an aldehyde + CO2. In Zea mays (Maize), this protein is Pyruvate decarboxylase 1 (PDC1).